Consider the following 521-residue polypeptide: GMP synthase [glutamine-hydrolyzing] (521 aa).

The 196-residue stretch at 8–203 folds into the Glutamine amidotransferase type-1 domain; sequence KILILDFGAQ…VVDVCGCQTL (196 aa). The active-site Nucleophile is the Cys85. Active-site residues include His177 and Glu179. The region spanning 204–396 is the GMPS ATP-PPase domain; the sequence is WTAANIIDDQ…LGLPRTMVYR (193 aa). An ATP-binding site is contributed by 231 to 237; sequence SGGVDSS.

Homodimer.

The enzyme catalyses XMP + L-glutamine + ATP + H2O = GMP + L-glutamate + AMP + diphosphate + 2 H(+). It functions in the pathway purine metabolism; GMP biosynthesis; GMP from XMP (L-Gln route): step 1/1. Functionally, catalyzes the synthesis of GMP from XMP. This chain is GMP synthase [glutamine-hydrolyzing], found in Stenotrophomonas maltophilia (strain K279a).